Here is a 421-residue protein sequence, read N- to C-terminus: Serine/threonine-protein kinase OXI1 (421 aa).

Positions 17 to 329 (LEVLSLLGRG…VEEIKGHDFF (313 aa)) constitute a Protein kinase domain. Residues 23–31 (LGRGAKGVV) and Lys-45 contribute to the ATP site. Asp-149 acts as the Proton acceptor in catalysis. The tract at residues 167–246 (DFDLSTNLAP…VGTEEYVAPE (80 aa)) is activation loop. A Phosphoserine; by PDPK1 modification is found at Ser-235. An AGC-kinase C-terminal domain is found at 330–421 (RGVDWEKVIL…LESDNNFLVF (92 aa)). Positions 418–421 (FLVF) match the PIF motif.

Belongs to the protein kinase superfamily. AGC Ser/Thr protein kinase family. In terms of assembly, interacts with PDK1 and PDK2. As to expression, expressed in roots and root hair cells.

It catalyses the reaction L-seryl-[protein] + ATP = O-phospho-L-seryl-[protein] + ADP + H(+). The catalysed reaction is L-threonyl-[protein] + ATP = O-phospho-L-threonyl-[protein] + ADP + H(+). With respect to regulation, activated in response to hydrogen peroxide and cellulase elicitor. Activated by PDK1 in a phosphatidic acid dependent manner. Functionally, involved in oxidative burst-mediated signaling. Required for basal resistance to P.parasitica infection and root hair growth. Partly required for the activation of MPK3 and MPK6 by hydrogen peroxide and cellulase elicitor. This chain is Serine/threonine-protein kinase OXI1, found in Arabidopsis thaliana (Mouse-ear cress).